The sequence spans 294 residues: UDP-3-O-acyl-N-acetylglucosamine deacetylase (294 aa).

3 residues coordinate Zn(2+): His75, His232, and Asp236. Residue His259 is the Proton donor of the active site.

The protein belongs to the LpxC family. Zn(2+) is required as a cofactor.

It catalyses the reaction a UDP-3-O-[(3R)-3-hydroxyacyl]-N-acetyl-alpha-D-glucosamine + H2O = a UDP-3-O-[(3R)-3-hydroxyacyl]-alpha-D-glucosamine + acetate. Its pathway is glycolipid biosynthesis; lipid IV(A) biosynthesis; lipid IV(A) from (3R)-3-hydroxytetradecanoyl-[acyl-carrier-protein] and UDP-N-acetyl-alpha-D-glucosamine: step 2/6. Its function is as follows. Catalyzes the hydrolysis of UDP-3-O-myristoyl-N-acetylglucosamine to form UDP-3-O-myristoylglucosamine and acetate, the committed step in lipid A biosynthesis. The polypeptide is UDP-3-O-acyl-N-acetylglucosamine deacetylase (Campylobacter hominis (strain ATCC BAA-381 / DSM 21671 / CCUG 45161 / LMG 19568 / NCTC 13146 / CH001A)).